A 30-amino-acid polypeptide reads, in one-letter code: Conotoxin Bt12.1 (30 aa).

Post-translationally, contains 3 disulfide bonds. Expressed by the venom duct.

Its subcellular location is the secreted. This Conus betulinus (Beech cone) protein is Conotoxin Bt12.1.